We begin with the raw amino-acid sequence, 995 residues long: DNA polymerase (995 aa).

Belongs to the DNA polymerase type-B family.

It catalyses the reaction DNA(n) + a 2'-deoxyribonucleoside 5'-triphosphate = DNA(n+1) + diphosphate. This is DNA polymerase (RF1) from Kluyveromyces lactis (strain ATCC 8585 / CBS 2359 / DSM 70799 / NBRC 1267 / NRRL Y-1140 / WM37) (Yeast).